The following is a 76-amino-acid chain: ATP synthase subunit 9, mitochondrial (76 aa).

Helical transmembrane passes span 11-31 (IGAG…GIVF) and 53-73 (ILGF…AFLI).

The protein belongs to the ATPase C chain family. As to quaternary structure, F-type ATPases have 2 components, CF(1) - the catalytic core - and CF(0) - the membrane proton channel. CF(1) has five subunits: alpha(3), beta(3), gamma(1), delta(1), epsilon(1). CF(0) has three main subunits: a, b and c.

Its subcellular location is the mitochondrion membrane. This protein is one of the chains of the nonenzymatic membrane component (F0) of mitochondrial ATPase. The sequence is that of ATP synthase subunit 9, mitochondrial (ATP9) from Chondrus crispus (Carrageen Irish moss).